Consider the following 983-residue polypeptide: Eukaryotic translation initiation factor 4E transporter (983 aa).

Residues 1–22 (MEKSVAETENGDAFLELKKLPT) are disordered. Residue serine 4 is modified to Phosphoserine. A YXXXXLphi motif motif is present at residues 29–35 (YTKEELL). Positions 40-99 (RPYSKQRPSCLSEKYDSDGVWDPEKWHASLYPASGRSSPVESLKKESESDRPSLVRRIAD) are disordered. Residues 52–66 (EKYDSDGVWDPEKWH) show a composition bias toward basic and acidic residues. A phosphoserine mark is found at serine 73 and serine 77. Residues 81 to 99 (SLKKESESDRPSLVRRIAD) are compositionally biased toward basic and acidic residues. Serine 114, serine 119, serine 135, and serine 137 each carry phosphoserine. The interaction with CSDE1 stretch occupies residues 130–160 (VSSRRSGSPLEKDSDGLRLLGGRRIGSGRII). Residues 194–210 (RREFGDSKRVFGERRRN) carry the Nuclear localization signal motif. Residues 206–229 (ERRRNDSYTEEEPEWFSAGPTSQS) form a disordered region. The segment at 218 to 239 (PEWFSAGPTSQSETIELTGFDD) is interaction with DDX6. A phosphoserine mark is found at serine 300, serine 344, serine 352, and serine 373. Positions 341-360 (SNPSRSGSRSSSLGSTPHEE) are disordered. Positions 344-355 (SRSGSRSSSLGS) are enriched in low complexity. A Glycyl lysine isopeptide (Lys-Gly) (interchain with G-Cter in SUMO2) cross-link involves residue lysine 409. Serine 416 is modified (phosphoserine). The Nuclear export signal signature appears at 437-446 (VEAGLKGLKV). The interaction with LSM14A stretch occupies residues 447–489 (DQQMKNSTPFMAEHLEETLSAASSNRQLKKDGDMTAFNKLVNT). Lysine 485 carries the post-translational modification N6-acetyllysine. Phosphoserine occurs at positions 563 and 586. 4 disordered regions span residues 585 to 616 (PSPI…SAQM), 642 to 693 (FYQP…MLSP), 708 to 800 (REKT…VPGT), and 906 to 951 (LHPP…SSPV). The short motif at 612–637 (VSAQMSQLELQQAALEGLALPHDLAV) is the Nuclear export signal element. Over residues 651-660 (QVDRTRDGLR) the composition is skewed to basic and acidic residues. Serine 692 carries the post-translational modification Phosphoserine. Residues 694–712 (SFTPTSVIRKMYESREKTK) are interaction with PATL1. The span at 724–734 (DGKEDTQKTSE) shows a compositional bias: basic and acidic residues. Composition is skewed to polar residues over residues 735–774 (ENLL…QTSR) and 910–928 (GSSS…NVPS). A phosphoserine mark is found at serine 751, serine 919, and serine 949. The interaction with LSM14A stretch occupies residues 938-983 (QLEHRTSQRSSSPVGLAKWFGSDVLQQPLPSMPTKVISVDELEYRQ).

The protein belongs to the 4E-T/EIF4E-T family. In terms of assembly, interacts (via YXXXXLphi motif) with EIF4E. Interacts (via YXXXXLphi motif) with EIF4E2. Interacts with DDX6. Interacts with CSDE1/UNR. Interacts with CNOT1; promoting association with the CCR4-NOT complex. Interacts with LSM14A; promoting EIF4ENIF1 localization to P-bodies. Interacts with PATL1. Interacts with importin beta only in the presence of importin alpha, suggesting a direct interaction with importin alpha. Interacts with APOBEC3G in an RNA-dependent manner. Post-translationally, phosphorylation by MAPK8/JNK1 and or MAPK9/JNK2 in response to oxidative stress promotes P-body assembly. Phosphorylated during meiotic maturation. Highly expressed in developing oocytes.

It is found in the cytoplasm. The protein resides in the nucleus. Its subcellular location is the PML body. It localises to the nucleus speckle. In terms of biological role, EIF4E-binding protein that regulates translation and stability of mRNAs in processing bodies (P-bodies). Plays a key role in P-bodies to coordinate the storage of translationally inactive mRNAs in the cytoplasm and prevent their degradation. Acts as a binding platform for multiple RNA-binding proteins: promotes deadenylation of mRNAs via its interaction with the CCR4-NOT complex, and blocks decapping via interaction with eIF4E (EIF4E and EIF4E2), thereby protecting deadenylated and repressed mRNAs from degradation. Component of a multiprotein complex that sequesters and represses translation of proneurogenic factors during neurogenesis. Promotes miRNA-mediated translational repression. Involved in mRNA translational repression mediated by the miRNA effector TNRC6B by protecting TNRC6B-targeted mRNAs from decapping and subsequent decay. Required for the formation of P-bodies. Also acts as a nucleoplasmic shuttling protein, which mediates the nuclear import of EIF4E and DDX6 by a piggy-back mechanism. This Mus musculus (Mouse) protein is Eukaryotic translation initiation factor 4E transporter.